The following is a 660-amino-acid chain: DNA mismatch repair protein MutL (660 aa).

This sequence belongs to the DNA mismatch repair MutL/HexB family.

Functionally, this protein is involved in the repair of mismatches in DNA. It is required for dam-dependent methyl-directed DNA mismatch repair. May act as a 'molecular matchmaker', a protein that promotes the formation of a stable complex between two or more DNA-binding proteins in an ATP-dependent manner without itself being part of a final effector complex. This Streptococcus equi subsp. zooepidemicus (strain H70) protein is DNA mismatch repair protein MutL.